A 125-amino-acid polypeptide reads, in one-letter code: Large ribosomal subunit protein bL19 (125 aa).

This sequence belongs to the bacterial ribosomal protein bL19 family.

Its function is as follows. This protein is located at the 30S-50S ribosomal subunit interface and may play a role in the structure and function of the aminoacyl-tRNA binding site. The protein is Large ribosomal subunit protein bL19 of Ehrlichia ruminantium (strain Gardel).